Consider the following 316-residue polypeptide: Lipoyl synthase (316 aa).

C61, C66, C72, C87, C91, C94, and S301 together coordinate [4Fe-4S] cluster. A Radical SAM core domain is found at 73–290; it reads FGKGTATFMI…ERAAIEMGFS (218 aa).

It belongs to the radical SAM superfamily. Lipoyl synthase family. [4Fe-4S] cluster is required as a cofactor.

It localises to the cytoplasm. It catalyses the reaction [[Fe-S] cluster scaffold protein carrying a second [4Fe-4S](2+) cluster] + N(6)-octanoyl-L-lysyl-[protein] + 2 oxidized [2Fe-2S]-[ferredoxin] + 2 S-adenosyl-L-methionine + 4 H(+) = [[Fe-S] cluster scaffold protein] + N(6)-[(R)-dihydrolipoyl]-L-lysyl-[protein] + 4 Fe(3+) + 2 hydrogen sulfide + 2 5'-deoxyadenosine + 2 L-methionine + 2 reduced [2Fe-2S]-[ferredoxin]. It functions in the pathway protein modification; protein lipoylation via endogenous pathway; protein N(6)-(lipoyl)lysine from octanoyl-[acyl-carrier-protein]: step 2/2. Functionally, catalyzes the radical-mediated insertion of two sulfur atoms into the C-6 and C-8 positions of the octanoyl moiety bound to the lipoyl domains of lipoate-dependent enzymes, thereby converting the octanoylated domains into lipoylated derivatives. The sequence is that of Lipoyl synthase from Nitrosospira multiformis (strain ATCC 25196 / NCIMB 11849 / C 71).